Reading from the N-terminus, the 354-residue chain is Selenide, water dikinase (354 aa).

Cys-23 is a catalytic residue. ATP-binding positions include Lys-26 and 54–56 (TSD). Position 57 (Asp-57) interacts with Mg(2+). ATP-binding positions include Asp-74, Asp-97, and 145 to 147 (GHS). Asp-97 serves as a coordination point for Mg(2+). Asp-233 is a Mg(2+) binding site.

The protein belongs to the selenophosphate synthase 1 family. Class I subfamily. Homodimer. The cofactor is Mg(2+).

The enzyme catalyses hydrogenselenide + ATP + H2O = selenophosphate + AMP + phosphate + 2 H(+). Its function is as follows. Synthesizes selenophosphate from selenide and ATP. This is Selenide, water dikinase from Burkholderia orbicola (strain MC0-3).